We begin with the raw amino-acid sequence, 216 residues long: Adenylate kinase (216 aa).

Residue 10 to 15 participates in ATP binding; the sequence is GAGKGT. An NMP region spans residues 30–59; the sequence is STGDMLRAAVSAQTEVGKRAKAVMDAGKLV. AMP-binding positions include Thr-31, Arg-36, 57–59, 85–88, and Gln-92; these read KLV and GFPR. The interval 126–163 is LID; that stretch reads GRYTCANCGTGYHDENLKPKVEGVCDKCGSTHFKRRPD. Arg-127 serves as a coordination point for ATP. Zn(2+) contacts are provided by Cys-130, Cys-133, Cys-150, and Cys-153. Residues Arg-160 and Arg-172 each coordinate AMP. Position 200 (Ala-200) interacts with ATP.

It belongs to the adenylate kinase family. As to quaternary structure, monomer.

It localises to the cytoplasm. The catalysed reaction is AMP + ATP = 2 ADP. It participates in purine metabolism; AMP biosynthesis via salvage pathway; AMP from ADP: step 1/1. Catalyzes the reversible transfer of the terminal phosphate group between ATP and AMP. Plays an important role in cellular energy homeostasis and in adenine nucleotide metabolism. The polypeptide is Adenylate kinase (Allorhizobium ampelinum (strain ATCC BAA-846 / DSM 112012 / S4) (Agrobacterium vitis (strain S4))).